A 312-amino-acid chain; its full sequence is HPr kinase/phosphorylase (312 aa).

Active-site residues include H141 and K162. Residue 156-163 (GDSGIGKS) participates in ATP binding. S163 serves as a coordination point for Mg(2+). The active-site Proton acceptor; for phosphorylation activity. Proton donor; for dephosphorylation activity is D180. The segment at 204-213 (LEIRGVGIID) is important for the catalytic mechanism of both phosphorylation and dephosphorylation. Residue E205 coordinates Mg(2+). R246 is a catalytic residue. The segment at 267 to 272 (PVRVGR) is important for the catalytic mechanism of dephosphorylation.

This sequence belongs to the HPrK/P family. As to quaternary structure, homohexamer. Requires Mg(2+) as cofactor.

The catalysed reaction is [HPr protein]-L-serine + ATP = [HPr protein]-O-phospho-L-serine + ADP + H(+). It carries out the reaction [HPr protein]-O-phospho-L-serine + phosphate + H(+) = [HPr protein]-L-serine + diphosphate. Functionally, catalyzes the ATP- as well as the pyrophosphate-dependent phosphorylation of a specific serine residue in HPr, a phosphocarrier protein of the phosphoenolpyruvate-dependent sugar phosphotransferase system (PTS). HprK/P also catalyzes the pyrophosphate-producing, inorganic phosphate-dependent dephosphorylation (phosphorolysis) of seryl-phosphorylated HPr (P-Ser-HPr). The two antagonistic activities of HprK/P are regulated by several intracellular metabolites, which change their concentration in response to the absence or presence of rapidly metabolisable carbon sources (glucose, fructose, etc.) in the growth medium. Therefore, by controlling the phosphorylation state of HPr, HPrK/P is a sensor enzyme that plays a major role in the regulation of carbon metabolism and sugar transport: it mediates carbon catabolite repression (CCR), and regulates PTS-catalyzed carbohydrate uptake and inducer exclusion. The protein is HPr kinase/phosphorylase of Pediococcus pentosaceus (strain ATCC 25745 / CCUG 21536 / LMG 10740 / 183-1w).